The sequence spans 247 residues: Transcription factor otaR1 (247 aa).

Disordered regions lie at residues 1 to 48 (MEPA…ETSM) and 100 to 143 (DNAS…PLGN). Positions 23–47 (DESSSTGLSLGSLLSSSNDLSSETS) are enriched in low complexity. Residues 134 to 143 (ANPTSVPLGN) show a composition bias toward polar residues. The basic motif stretch occupies residues 156–196 (KKYHEKYKERNRVAAGKSRQKQVDLIELLQAEQREEERRRK). Positions 156-219 (KKYHEKYKER…LDLKQELQHH (64 aa)) constitute a bZIP domain. Residues 198 to 212 (LERELSQIHKELLDL) are leucine-zipper.

The protein resides in the nucleus. Transcription factor; part of the gene cluster that mediates the biosynthesis of ochratoxin A (OTA), a mycotoxin demonstrated to have nephrotoxic, immunotoxic, genotoxic, neurotoxic, and teratogenic properties. Positively regulates the expression of the cluster genes otaA, otaB, otaC and otaD, and the subsequent production of OTA. This chain is Transcription factor otaR1, found in Aspergillus carbonarius (strain ITEM 5010).